Here is a 352-residue protein sequence, read N- to C-terminus: Rhodopsin (352 aa).

Over 1 to 36 (MNGTEGPFFYIPMVNTTGVVRSPYEYPQYYLVNPAA) the chain is Extracellular. N-linked (GlcNAc...) asparagine glycosylation is found at Asn-2 and Asn-15. Residues 37–61 (YACLGAYMFFLILVGFPVNFLTLYV) form a helical membrane-spanning segment. The Cytoplasmic portion of the chain corresponds to 62 to 73 (TLEHKKLRTPLN). Residues 74–96 (YILLNLAVADLFMVFGGFTTTIY) traverse the membrane as a helical segment. At 97 to 110 (TSMHGYFVLGRLGC) the chain is on the extracellular side. The cysteines at positions 110 and 187 are disulfide-linked. Residues 111-133 (NIEGFFATLGGEIALWSLVVLAI) traverse the membrane as a helical segment. The 'Ionic lock' involved in activated form stabilization motif lies at 134-136 (ERW). The Cytoplasmic portion of the chain corresponds to 134 to 152 (ERWVVVCKPISNFRFGENH). A helical membrane pass occupies residues 153-173 (AIMGVAFTWFMASACAVPPLV). The Extracellular segment spans residues 174 to 202 (GWSRYIPEGMQCSCGIDYYTRAEGFNNES). Asn-200 carries N-linked (GlcNAc...) asparagine glycosylation. A helical membrane pass occupies residues 203 to 224 (FVIYMFTVHFCIPLAVVGFCYG). Over 225 to 252 (RLLCAVKEAAAAQQESETTQRAEREVSR) the chain is Cytoplasmic. Residues 253 to 274 (MVVIMVIGFLVCWLPYASVAWY) form a helical membrane-spanning segment. Over 275-286 (IFTHQGSEFGPL) the chain is Extracellular. A helical transmembrane segment spans residues 287–308 (FMTIPAFFAKSSSIYNPMIYIC). Residue Lys-296 is modified to N6-(retinylidene)lysine. Residues 309–352 (MNKQFRHCMITTLCCGKNPFEEEEGASTTKTEASSVSSSSVSPA) are Cytoplasmic-facing. 2 S-palmitoyl cysteine lipidation sites follow: Cys-322 and Cys-323. Residues 331–352 (EEGASTTKTEASSVSSSSVSPA) form a disordered region. Residues 342 to 352 (SSVSSSSVSPA) show a composition bias toward low complexity.

Belongs to the G-protein coupled receptor 1 family. Opsin subfamily. In terms of processing, phosphorylated on some or all of the serine and threonine residues present in the C-terminal region. Contains one covalently linked retinal chromophore.

Its subcellular location is the membrane. It localises to the cell projection. The protein localises to the cilium. It is found in the photoreceptor outer segment. Its function is as follows. Photoreceptor required for image-forming vision at low light intensity. While most salt water fish species use retinal as chromophore, most freshwater fish use 3-dehydroretinal, or a mixture of retinal and 3-dehydroretinal. Light-induced isomerization of 11-cis to all-trans retinal triggers a conformational change that activates signaling via G-proteins. Subsequent receptor phosphorylation mediates displacement of the bound G-protein alpha subunit by arrestin and terminates signaling. The chain is Rhodopsin (rho) from Gobius niger (Black goby).